The primary structure comprises 167 residues: Large ribosomal subunit protein uL10 (167 aa).

The protein belongs to the universal ribosomal protein uL10 family. In terms of assembly, part of the ribosomal stalk of the 50S ribosomal subunit. The N-terminus interacts with L11 and the large rRNA to form the base of the stalk. The C-terminus forms an elongated spine to which L12 dimers bind in a sequential fashion forming a multimeric L10(L12)X complex.

Functionally, forms part of the ribosomal stalk, playing a central role in the interaction of the ribosome with GTP-bound translation factors. This is Large ribosomal subunit protein uL10 from Psychromonas ingrahamii (strain DSM 17664 / CCUG 51855 / 37).